The chain runs to 142 residues: Hemoglobin subunit beta-1 (142 aa).

A Globin domain is found at 2–142 (SLTDEEIRLI…VTEALSCQYH (141 aa)). Heme b contacts are provided by H59 and H88.

This sequence belongs to the globin family. In terms of assembly, heterotetramer of two alpha chains and two beta chains. In terms of tissue distribution, red blood cells.

Functionally, involved in oxygen transport from the lung to the various peripheral tissues. This chain is Hemoglobin subunit beta-1 (HBB1), found in Torpedo marmorata (Marbled electric ray).